We begin with the raw amino-acid sequence, 258 residues long: Aquaporin PIP1-2 (258 aa).

The interval 1–37 (MEGKEEDVRLGANKFTERQPIGTAAQSQDKDYKEPPP) is disordered. Residues 1 to 55 (MEGKEEDVRLGANKFTERQPIGTAAQSQDKDYKEPPPAPLFEPGELSSWSFYRAG) are Cytoplasmic-facing. Residues 56–76 (IAEFVATFLFLYITILTVMGV) form a helical membrane-spanning segment. At 77 to 89 (VKSSTKCSTVGIQ) the chain is on the extracellular side. Residues 90–110 (GIAWAFGGMIFALVYCTAGIS) form a helical membrane-spanning segment. At 111–133 (GGHINPAVTFGLFLARKLSLTRA) the chain is on the cytoplasmic side. The short motif at 115–117 (NPA) is the NPA 1 element. The helical transmembrane segment at 134–154 (LFYMVMQCLGAICGAGVVKGF) threads the bilayer. At 155-175 (QKGLYENNGGGANVVAPGYTK) the chain is on the extracellular side. A helical membrane pass occupies residues 176–196 (GDGLGAEIVGTFILVYTVFSA). The Cytoplasmic portion of the chain corresponds to 197-209 (TDAKRSARDSHVP). A helical membrane pass occupies residues 210 to 230 (ILAPLPIGFAVFLVHLATIPI). The Extracellular segment spans residues 231 to 258 (TGTGINPARSLGAAIIYNKGHAWDDHWI). The NPA 2 motif lies at 236-238 (NPA).

Belongs to the MIP/aquaporin (TC 1.A.8) family. PIP (TC 1.A.8.11) subfamily. As to expression, barely detectable in roots, leaves and fruits.

It is found in the cell membrane. Functionally, water channel required to facilitate the transport of water across cell membrane; mercury-insensitive. Contributes to the tolerance to multiple abiotic stresses including salt (NaCl), cold and water deprivation, by modulating cytosolic K(+)/Na(+) ratio, maintaining osmotic balance, and reducing membrane injury (e.g. oxidative injury). In Musa acuminata (Banana), this protein is Aquaporin PIP1-2.